Reading from the N-terminus, the 727-residue chain is Catalase-peroxidase (727 aa).

The interval 1–26 is disordered; the sequence is MDTKVETGGKCPVAHGPAGAKGRGNR. The segment at residues 97-219 is a cross-link (tryptophyl-tyrosyl-methioninium (Trp-Tyr) (with M-245)); the sequence is WHSAGTYRIT…LGAVQMGLIY (123 aa). The active-site Proton acceptor is histidine 98. The segment at residues 219-245 is a cross-link (tryptophyl-tyrosyl-methioninium (Tyr-Met) (with W-97)); it reads YVNPEGPNGNPDPIAAARDIRETFSRM. Residue histidine 260 coordinates heme b.

Belongs to the peroxidase family. Peroxidase/catalase subfamily. In terms of assembly, homodimer or homotetramer. The cofactor is heme b. Post-translationally, formation of the three residue Trp-Tyr-Met cross-link is important for the catalase, but not the peroxidase activity of the enzyme.

It carries out the reaction H2O2 + AH2 = A + 2 H2O. The enzyme catalyses 2 H2O2 = O2 + 2 H2O. Functionally, bifunctional enzyme with both catalase and broad-spectrum peroxidase activity. This chain is Catalase-peroxidase, found in Allorhizobium ampelinum (strain ATCC BAA-846 / DSM 112012 / S4) (Agrobacterium vitis (strain S4)).